We begin with the raw amino-acid sequence, 139 residues long: MAQAAKKQNLGTGRRKTSSARVFLRSGTGQIIINGLPLDEYFGRETARMVVRQPLVKLDVQSRFDVYATVQGGGDSGQAGAIRHGITRALIQYDEEGGEGGTWRSTLRKAGFVTRDPRMVERKKVGLHGARRGTQFSKR.

The protein belongs to the universal ribosomal protein uS9 family.

The chain is Small ribosomal subunit protein uS9 from Coxiella burnetii (strain CbuG_Q212) (Coxiella burnetii (strain Q212)).